The primary structure comprises 1170 residues: PLQLVLVFSQGILNCCVAYNVGLPKAKIFSGPSSEQFGYAVQQFINPKGNWLLVGSPWSGFPKNRMGDVYKCPVDLSTTTCEKLNLQTSTSMSNVTEMKTNMSLGLTLTRNVGTGGFLTCGPLWAQQCGSQYYTTGVCSDVSPDFQLRTSFAPAVQTCPSFIDVVVVCDESNSIYPWDAVKNFLEKFVQGLDIGPTKTQMGLIQYANNPRVVFNLNTFKSKDEMIKATSQTFQYGGDLTNTFKAIQYARDTAYSTAAGGRPGATKVMVVVTDGESHDGSKLKAVIDQCNKDNILRFGIAVLGYLNRNALDTKNLIKEIKAIASIPTERHFFNVSDEADLLEKAGTIGEQIFSIEGTVQGGDNFQMEMSQVGFSAEYSPQNNILMLGAVGAYDWSGTVVQKTPHGHLIFSKQAFEQILQDRNHSSYLGYSVASISTGNSVHFVAGAPRANYTGQIVLYSVNENGNVTVIQSQRGDQIGSYFGSVLCAVDVNKDTITDVLLVGAPMYMNDLKKEEGRVYLFTITKGILNWHQFLEGPNGLENARFGSAIAALSDINMDGFNDVIVGSPLENQNSGAVYIYNGHEGMIRLRYSQKILGSDRAFSSHLQYFGRSLDGYGDLNGDSITDVSVGAFGQVVQLWSQSIADVSVDASFTPKKITLLNKNAEIKLKLCFSAKFRPTNQNNQVAIVYNITIDEDQFSSRVISRGLFKENNERCLQKTMIVSQAQRCSEYIIHIQEPSDIISPLNLCMNISLENPGTNPALEAYSETVKVFSIPFHKDCGDDGVCISDLVLNVQQLPATQQQPFIVSNQNKRLTFSVQLKNKKESAYNTEIVVDFSENLFFASWSMPVDGTEVTCQIASSQKSVTCNVGYPALKSKQQVTFTINFDFNLQNLQNQASISFRALSESQEENMADNSVNLKLSLLYDAEIHITRSTNINFYEVSLDGNVSSVVHSFEDIGPKFIFSIKVTTGSVPVSMASVIIHIPQYTKDKNPLMYLTGVHTDQAGDISCEAEINPLKIGQTSSSVSFKSENFRHIKELNCRTASCSNIMCWLRDLQVKGEYFLNVSTRIWNGTFAASTFQTVQLTAAAEIDTYNPQIYVIEENTVTIPLTIMKPHEKVEVPTGVIVGSVIAGILLLLALVAILWKLGFFKRKYEKMAKNPDETDETTELNS.

The signal sequence occupies residues 1–18 (PLQLVLVFSQGILNCCVA). The Extracellular portion of the chain corresponds to 19–1121 (YNVGLPKAKI…KPHEKVEVPT (1103 aa)). 2 FG-GAP repeats span residues 23 to 81 (LPKA…TTTC) and 90 to 150 (TSMS…LRTS). A disulfide bridge links C72 with C81. N-linked (GlcNAc...) asparagine glycans are attached at residues N94, N101, and N332. The VWFA domain maps to 177–354 (WDAVKNFLEK…TIGEQIFSIE (178 aa)). 5 FG-GAP repeats span residues 355 to 409 (GTVQ…LIFS), 412 to 464 (AFEQ…ENGN), 466 to 528 (TVIQ…ILNW), 529 to 587 (HQFL…MIRL), and 591 to 653 (QKIL…FTPK). Residues N421, N449, and N464 are each glycosylated (N-linked (GlcNAc...) asparagine). The short motif at 472–474 (RGD) is the Cell attachment site element. Ca(2+) is bound by residues D488, N490, D492, D496, D552, N554, D556, D560, D616, N618, D620, and D624. C669 and C726 are joined by a disulfide. N688 and N748 each carry an N-linked (GlcNAc...) asparagine glycan. 2 cysteine pairs are disulfide-bonded: C778–C784 and C854–C865. N-linked (GlcNAc...) asparagine glycosylation is present at N945. 2 cysteine pairs are disulfide-bonded: C1008–C1039 and C1044–C1049. N-linked (GlcNAc...) asparagine glycans are attached at residues N1063 and N1070. Residues 1122-1143 (GVIVGSVIAGILLLLALVAILW) traverse the membrane as a helical segment. The Cytoplasmic segment spans residues 1144 to 1170 (KLGFFKRKYEKMAKNPDETDETTELNS). A GFFKR motif motif is present at residues 1146–1150 (GFFKR).

Belongs to the integrin alpha chain family. Heterodimer of an alpha and a beta subunit. Alpha-2 associates with beta-1. Interacts with HPS5 and RAB21.

It localises to the membrane. Integrin alpha-2/beta-1 is a receptor for laminin, collagen, collagen C-propeptides, fibronectin and E-cadherin. It recognizes the proline-hydroxylated sequence G-F-P-G-E-R in collagen. It is responsible for adhesion of platelets and other cells to collagens, modulation of collagen and collagenase gene expression, force generation and organization of newly synthesized extracellular matrix. The sequence is that of Integrin alpha-2 (ITGA2) from Bos taurus (Bovine).